The chain runs to 158 residues: Glycine/sarcosine/betaine reductase complex component A (158 aa).

Residue Sec44 is part of the active site. Sec44 is a non-standard amino acid (selenocysteine).

The protein belongs to the GrdA family. In terms of assembly, monomer. Component of the glycine, sarcosine and betaine reductase complexes, together with components B and C.

It catalyses the reaction acetyl phosphate + [thioredoxin]-disulfide + NH4(+) + H2O = [thioredoxin]-dithiol + glycine + phosphate + H(+). The enzyme catalyses acetyl phosphate + methylamine + [thioredoxin]-disulfide + H2O = sarcosine + [thioredoxin]-dithiol + phosphate + H(+). It carries out the reaction acetyl phosphate + trimethylamine + [thioredoxin]-disulfide + H2O = glycine betaine + [thioredoxin]-dithiol + phosphate + H(+). In the first step of glycine, betaine and sarcosine reductases, the substrate is bound to component PB via a Schiff base intermediate. Then the PB-activated substrate is nucleophilically attacked by the selenol anion of component PA to transform it to a carboxymethylated selenoether and the respective amine. By action of component PC, acetyl phosphate is formed, leaving component PA in its oxidized state. Finally component PA becomes reduced by the thioredoxin system to start a new catalytic cycle of reductive deamination. The polypeptide is Glycine/sarcosine/betaine reductase complex component A (Alkaliphilus metalliredigens (strain QYMF)).